A 205-amino-acid polypeptide reads, in one-letter code: Large ribosomal subunit protein uL4 (205 aa).

Residues 53-77 are disordered; the sequence is RAAVRGGGRKPWKQKGTGRARAGSI. The segment covering 59-70 has biased composition (basic residues); the sequence is GGRKPWKQKGTG.

It belongs to the universal ribosomal protein uL4 family. Part of the 50S ribosomal subunit.

Its function is as follows. One of the primary rRNA binding proteins, this protein initially binds near the 5'-end of the 23S rRNA. It is important during the early stages of 50S assembly. It makes multiple contacts with different domains of the 23S rRNA in the assembled 50S subunit and ribosome. Functionally, forms part of the polypeptide exit tunnel. The polypeptide is Large ribosomal subunit protein uL4 (Acidithiobacillus ferrooxidans (strain ATCC 23270 / DSM 14882 / CIP 104768 / NCIMB 8455) (Ferrobacillus ferrooxidans (strain ATCC 23270))).